Here is a 250-residue protein sequence, read N- to C-terminus: DNA repair protein RecO (250 aa).

This sequence belongs to the RecO family.

Its function is as follows. Involved in DNA repair and RecF pathway recombination. The polypeptide is DNA repair protein RecO (Staphylococcus aureus (strain MRSA252)).